We begin with the raw amino-acid sequence, 337 residues long: Inositol 2-dehydrogenase 1 (337 aa).

Belongs to the Gfo/Idh/MocA family. As to quaternary structure, homotetramer.

It catalyses the reaction myo-inositol + NAD(+) = scyllo-inosose + NADH + H(+). In terms of biological role, involved in the oxidation of myo-inositol (MI) to 2-keto-myo-inositol (2KMI or 2-inosose). The polypeptide is Inositol 2-dehydrogenase 1 (Saccharopolyspora erythraea (strain ATCC 11635 / DSM 40517 / JCM 4748 / NBRC 13426 / NCIMB 8594 / NRRL 2338)).